A 178-amino-acid polypeptide reads, in one-letter code: GTP-dependent dephospho-CoA kinase (178 aa).

Positions 55, 57, 74, 76, and 127 each coordinate GTP.

This sequence belongs to the GTP-dependent DPCK family.

It carries out the reaction 3'-dephospho-CoA + GTP = GDP + CoA + H(+). The protein operates within cofactor biosynthesis; coenzyme A biosynthesis. In terms of biological role, catalyzes the GTP-dependent phosphorylation of the 3'-hydroxyl group of dephosphocoenzyme A to form coenzyme A (CoA). The polypeptide is GTP-dependent dephospho-CoA kinase (Saccharolobus islandicus (strain Y.N.15.51 / Yellowstone #2) (Sulfolobus islandicus)).